Consider the following 236-residue polypeptide: CHD1 helical C-terminal domain containing protein 1 (236 aa).

The CHD1 helical C-terminal domain (CHCT) stretch occupies residues leucine 44–threonine 145. A disordered region spans residues leucine 184–proline 236. A compositionally biased stretch (basic and acidic residues) spans serine 202–glutamine 216.

Its subcellular location is the cytoplasm. It is found in the nucleus. May play a role in regulation of apoptosis. The protein is CHD1 helical C-terminal domain containing protein 1 of Homo sapiens (Human).